The following is a 410-amino-acid chain: Peptidase T (410 aa).

His79 provides a ligand contact to Zn(2+). Asp81 is an active-site residue. Residue Asp142 coordinates Zn(2+). Glu176 (proton acceptor) is an active-site residue. Zn(2+)-binding residues include Glu177, Asp199, and His381.

Belongs to the peptidase M20B family. Zn(2+) serves as cofactor.

It is found in the cytoplasm. It catalyses the reaction Release of the N-terminal residue from a tripeptide.. In terms of biological role, cleaves the N-terminal amino acid of tripeptides. The sequence is that of Peptidase T from Brevibacillus brevis (strain 47 / JCM 6285 / NBRC 100599).